A 210-amino-acid chain; its full sequence is Ribosomal RNA small subunit methyltransferase G (210 aa).

S-adenosyl-L-methionine is bound by residues G77, F82, 100–102, 128–129, and R141; these read ERS and VE.

The protein belongs to the methyltransferase superfamily. RNA methyltransferase RsmG family.

It localises to the cytoplasm. Specifically methylates the N7 position of a guanine in 16S rRNA. In Borrelia recurrentis (strain A1), this protein is Ribosomal RNA small subunit methyltransferase G.